The sequence spans 311 residues: Malate dehydrogenase (311 aa).

Residues 7–13 (GAAGGIG) and Asp-34 contribute to the NAD(+) site. Substrate contacts are provided by Arg-81 and Arg-87. Residues Asn-94 and 117 to 119 (ITN) contribute to the NAD(+) site. Residues Asn-119 and Arg-153 each coordinate substrate. Residue His-177 is the Proton acceptor of the active site. Residue Met-227 coordinates NAD(+).

Belongs to the LDH/MDH superfamily. MDH type 1 family. In terms of assembly, homodimer.

The catalysed reaction is (S)-malate + NAD(+) = oxaloacetate + NADH + H(+). In terms of biological role, catalyzes the reversible oxidation of malate to oxaloacetate. In Shewanella sp. (strain ANA-3), this protein is Malate dehydrogenase.